Consider the following 279-residue polypeptide: Succinate dehydrogenase [ubiquinone] iron-sulfur subunit 1, mitochondrial (279 aa).

The transit peptide at 1 to 28 (MASGLIGRLVGTKPSKLATAARLIPARW) directs the protein to the mitochondrion. In terms of domain architecture, 2Fe-2S ferredoxin-type spans 52-141 (FQIYRWNPDN…ETTITPLPHM (90 aa)). [2Fe-2S] cluster is bound by residues Cys-102, Cys-107, and Cys-122. In terms of domain architecture, 4Fe-4S ferredoxin-type spans 184–214 (DRAKLDGMYECILCACCSTSCPSYWWNPESY). [4Fe-4S] cluster contacts are provided by Cys-194, Cys-197, and Cys-200. [3Fe-4S] cluster is bound at residue Cys-204. Trp-209 contacts a ubiquinone. Residues Cys-251 and Cys-257 each coordinate [3Fe-4S] cluster. Residue Cys-261 participates in [4Fe-4S] cluster binding.

Belongs to the succinate dehydrogenase/fumarate reductase iron-sulfur protein family. In terms of assembly, component of complex II composed of eight subunits in plants: four classical SDH subunits SDH1, SDH2, SDH3 and SDH4 (a flavoprotein (FP), an iron-sulfur protein (IP), and a cytochrome b composed of a large and a small subunit.), as well as four subunits unknown in mitochondria from bacteria and heterotrophic eukaryotes. It depends on [2Fe-2S] cluster as a cofactor. [3Fe-4S] cluster serves as cofactor. The cofactor is [4Fe-4S] cluster. Ubiquitous. Preferentially expressed in flowers and inflorescences.

The protein resides in the mitochondrion inner membrane. It catalyses the reaction a quinone + succinate = fumarate + a quinol. Its pathway is carbohydrate metabolism; tricarboxylic acid cycle; fumarate from succinate (eukaryal route): step 1/1. In terms of biological role, iron-sulfur protein (IP) subunit of succinate dehydrogenase (SDH) that is involved in complex II of the mitochondrial electron transport chain and is responsible for transferring electrons from succinate to ubiquinone (coenzyme Q). The protein is Succinate dehydrogenase [ubiquinone] iron-sulfur subunit 1, mitochondrial (SDH2-1) of Arabidopsis thaliana (Mouse-ear cress).